The primary structure comprises 413 residues: 3-hydroxy-3-methylglutaryl-coenzyme A reductase (413 aa).

Residues E106 and D312 each act as charge relay system in the active site. H408 (proton donor) is an active-site residue.

The protein belongs to the HMG-CoA reductase family.

The catalysed reaction is (R)-mevalonate + 2 NADP(+) + CoA = (3S)-3-hydroxy-3-methylglutaryl-CoA + 2 NADPH + 2 H(+). The protein operates within metabolic intermediate biosynthesis; (R)-mevalonate biosynthesis; (R)-mevalonate from acetyl-CoA: step 3/3. Its function is as follows. Converts HMG-CoA to mevalonate. The polypeptide is 3-hydroxy-3-methylglutaryl-coenzyme A reductase (hmgA) (Pyrococcus horikoshii (strain ATCC 700860 / DSM 12428 / JCM 9974 / NBRC 100139 / OT-3)).